The primary structure comprises 287 residues: ATP synthase gamma chain (287 aa).

Belongs to the ATPase gamma chain family. F-type ATPases have 2 components, CF(1) - the catalytic core - and CF(0) - the membrane proton channel. CF(1) has five subunits: alpha(3), beta(3), gamma(1), delta(1), epsilon(1). CF(0) has three main subunits: a, b and c.

Its subcellular location is the cell inner membrane. Produces ATP from ADP in the presence of a proton gradient across the membrane. The gamma chain is believed to be important in regulating ATPase activity and the flow of protons through the CF(0) complex. This is ATP synthase gamma chain from Xanthomonas axonopodis pv. citri (strain 306).